The chain runs to 883 residues: Translation initiation factor IF-2 (883 aa).

2 disordered regions span residues K52 to E102 and V115 to P297. 2 stretches are compositionally biased toward basic and acidic residues: residues V115–T179 and A204–A237. Over residues K239–K248 the composition is skewed to low complexity. The span at P265–R275 shows a compositional bias: basic residues. A compositionally biased stretch (low complexity) spans R276–K285. The tr-type G domain occupies P383–E550. Residues G392 to T399 form a G1 region. G392 to T399 serves as a coordination point for GTP. The interval G417–H421 is G2. The tract at residues D438–G441 is G3. Residues D438 to H442 and N492 to D495 contribute to the GTP site. The segment at N492 to D495 is G4. The interval S528 to K530 is G5.

It belongs to the TRAFAC class translation factor GTPase superfamily. Classic translation factor GTPase family. IF-2 subfamily.

Its subcellular location is the cytoplasm. Functionally, one of the essential components for the initiation of protein synthesis. Protects formylmethionyl-tRNA from spontaneous hydrolysis and promotes its binding to the 30S ribosomal subunits. Also involved in the hydrolysis of GTP during the formation of the 70S ribosomal complex. This chain is Translation initiation factor IF-2, found in Alkalilimnicola ehrlichii (strain ATCC BAA-1101 / DSM 17681 / MLHE-1).